The sequence spans 483 residues: Glutamyl-tRNA(Gln) amidotransferase subunit A (483 aa).

Residues lysine 77 and serine 152 each act as charge relay system in the active site. Serine 176 acts as the Acyl-ester intermediate in catalysis.

This sequence belongs to the amidase family. GatA subfamily. As to quaternary structure, heterotrimer of A, B and C subunits.

It catalyses the reaction L-glutamyl-tRNA(Gln) + L-glutamine + ATP + H2O = L-glutaminyl-tRNA(Gln) + L-glutamate + ADP + phosphate + H(+). Allows the formation of correctly charged Gln-tRNA(Gln) through the transamidation of misacylated Glu-tRNA(Gln) in organisms which lack glutaminyl-tRNA synthetase. The reaction takes place in the presence of glutamine and ATP through an activated gamma-phospho-Glu-tRNA(Gln). The sequence is that of Glutamyl-tRNA(Gln) amidotransferase subunit A from Listeria monocytogenes serotype 4b (strain CLIP80459).